Here is a 79-residue protein sequence, read N- to C-terminus: DNA gyrase inhibitor YacG (79 aa).

Positions 7, 10, 26, and 30 each coordinate Zn(2+).

Belongs to the DNA gyrase inhibitor YacG family. Interacts with GyrB. Requires Zn(2+) as cofactor.

Its function is as follows. Inhibits all the catalytic activities of DNA gyrase by preventing its interaction with DNA. Acts by binding directly to the C-terminal domain of GyrB, which probably disrupts DNA binding by the gyrase. This is DNA gyrase inhibitor YacG from Shewanella halifaxensis (strain HAW-EB4).